The primary structure comprises 386 residues: Copper-containing nitrite reductase (386 aa).

The N-terminal stretch at 1 to 18 (MKRQALAAIIASMFALAA) is a signal peptide. The N-palmitoyl cysteine moiety is linked to residue C19. C19 carries S-diacylglycerol cysteine lipidation. Plastocyanin-like domains are found at residues 97–191 (WTFD…ILVE) and 241–342 (GHVG…LKVE). Cu cation contacts are provided by H130, H135, H170, C171, H179, and M184. H135 contributes to the substrate binding site. Residue H276 participates in substrate binding. H325 serves as a coordination point for Cu cation. The tract at residues 363–386 (GAAPAASAPAASAPAASAPAKSDY) is disordered. Low complexity predominate over residues 364–386 (AAPAASAPAASAPAASAPAKSDY). Tandem repeats lie at residues 367-371 (AASAP), 372-376 (AASAP), and 377-381 (AASAP). Residues 367–381 (AASAPAASAPAASAP) form a 3 X 5 AA tandem repeats of A-A-S-A-P region.

The protein belongs to the multicopper oxidase family. Homotrimer. The cofactor is Cu(+). Cu(2+) serves as cofactor.

Its subcellular location is the cell outer membrane. It carries out the reaction nitric oxide + Fe(III)-[cytochrome c] + H2O = Fe(II)-[cytochrome c] + nitrite + 2 H(+). Catalyzes the reduction of nitrite to nitric oxide (NO). It could be essential for growth and survival in oxygen-depleted environments. The protein is Copper-containing nitrite reductase (aniA) of Neisseria meningitidis serogroup A / serotype 4A (strain DSM 15465 / Z2491).